The primary structure comprises 587 residues: MTHAPTPPAASNFLRPIIEDDLQANRFQGKLWAGKPGPAALQAQGQPDPARIRTRFPPEPNGYLHIGHAKSICVNFGLARDYGGVCHLRFDDTNPEKEEQEYVDAIIEAVHWLGFDWQADGNDNLYFASDYFEFMYEFAEALVQAGHAYVDEQSAEEIRASRGTLTEPGTDSPWRDRPADESLLRLREMRDGKHPDGSLVLRARIDMASPNINLRDPVMYRVRHATHHRTGNAWCIYPMYSWAHPVEDALEGITHSICTLEFEDQRPFYDWILARLAELGKLARPLPHQYEFARLNLTYVVTSKRKLLQLVREGYVDGWDDPRMPTLFGLRRRGYTPSSIRLFCDRTAVSKSDSRIDYSLLEQAVRDDLDPVAPRSVAVLDPLKLVITNHPEGRSETCSAPRNPHDPQAGVREFPFTRELWIEQDDFREEPPKKYFRLFPGNTVRLKYGYVVRCTGFTKDESGKVVEVQAEYLPDTKSGTPGADSVKVKGNITWVSAAHAVPAQVHLYDRLFADAHPDGGDKDFLACLNPNSKQTVQAWLEPGIEAVPGATWQFERLGYFTVDSKDSRPEAPVLNRIVTLRDSWQAA.

The 'HIGH' region motif lies at 58 to 68 (PEPNGYLHIGH). ATP is bound by residues 59 to 61 (EPN) and 65 to 71 (HIGHAKS). Residues Asp-91 and Tyr-240 each contribute to the L-glutamine site. Residues Thr-259 and 294–295 (RL) each bind ATP. The short motif at 301–305 (VTSKR) is the 'KMSKS' region element.

It belongs to the class-I aminoacyl-tRNA synthetase family. Monomer.

Its subcellular location is the cytoplasm. It catalyses the reaction tRNA(Gln) + L-glutamine + ATP = L-glutaminyl-tRNA(Gln) + AMP + diphosphate. This Bordetella parapertussis (strain 12822 / ATCC BAA-587 / NCTC 13253) protein is Glutamine--tRNA ligase.